Reading from the N-terminus, the 172-residue chain is MDRAEKREFVAWLNGAFKESGSVVVAHYTGLTVAQMSDLRSKMRDAGGSVKVAKNRLAKIALQGTESEGIADLFTGQTVVAYANDPITAPKVAVEFAKANDKLVILGGAMGATTLNADGVKSLASLPSLDELRAKLVGMIQTPAQRLAVLTSAPAGQIARVIGAHARKNEAA.

It belongs to the universal ribosomal protein uL10 family. Part of the ribosomal stalk of the 50S ribosomal subunit. The N-terminus interacts with L11 and the large rRNA to form the base of the stalk. The C-terminus forms an elongated spine to which L12 dimers bind in a sequential fashion forming a multimeric L10(L12)X complex.

Forms part of the ribosomal stalk, playing a central role in the interaction of the ribosome with GTP-bound translation factors. This Brucella abortus (strain S19) protein is Large ribosomal subunit protein uL10.